A 418-amino-acid polypeptide reads, in one-letter code: Gene 68 protein (418 aa).

Disordered stretches follow at residues 230 to 304 (IPAP…IHTL) and 353 to 418 (DTFE…ERRA). The span at 241–250 (RPSEGGDARP) shows a compositional bias: basic and acidic residues. A compositionally biased stretch (basic residues) spans 257 to 266 (SRARSVHGRR). Basic and acidic residues predominate over residues 353–369 (DTFEDNRRDELRHDDSR). Residues 395–404 (PHLRRSRGRG) show a composition bias toward basic residues.

This sequence belongs to the herpesviridae US2 family.

The chain is Gene 68 protein from Equine herpesvirus 1 (strain Ab4p) (EHV-1).